Reading from the N-terminus, the 218-residue chain is Uracil-DNA glycosylase (218 aa).

Catalysis depends on Asp59, which acts as the Proton acceptor.

This sequence belongs to the uracil-DNA glycosylase (UDG) superfamily. UNG family.

The protein localises to the cytoplasm. The catalysed reaction is Hydrolyzes single-stranded DNA or mismatched double-stranded DNA and polynucleotides, releasing free uracil.. In terms of biological role, excises uracil residues from the DNA which can arise as a result of misincorporation of dUMP residues by DNA polymerase or due to deamination of cytosine. This is Uracil-DNA glycosylase from Staphylococcus saprophyticus subsp. saprophyticus (strain ATCC 15305 / DSM 20229 / NCIMB 8711 / NCTC 7292 / S-41).